A 409-amino-acid chain; its full sequence is DEP domain-containing mTOR-interacting protein (409 aa).

N-acetylmethionine is present on Met-1. A compositionally biased stretch (gly residues) spans 1-10 (MEEGSSGGSG). Residues 1 to 23 (MEEGSSGGSGSSDSNAGGSGGVQ) are disordered. 2 consecutive DEP domains span residues 36 to 119 (TGEQ…RFRK) and 146 to 219 (PETT…QFRM). The DDEX motif signature appears at 217–235 (FRMNFRRRRRLMELLNETS). Residue Ser-235 is modified to Phosphoserine. A Phosphothreonine modification is found at Thr-241. 2 positions are modified to phosphoserine: Ser-244 and Ser-258. Thr-259 is subject to Phosphothreonine. 7 positions are modified to phosphoserine: Ser-263, Ser-265, Ser-280, Ser-282, Ser-283, Ser-286, and Ser-287. Residues 286–291 (SSGYFS) carry the BetaTrCP degron motif motif. Tyr-289 carries the phosphotyrosine modification. Phosphoserine is present on residues Ser-291 and Ser-293. A Phosphothreonine modification is found at Thr-295. 3 positions are modified to phosphoserine: Ser-297, Ser-298, and Ser-299. The region spanning 330 to 407 (TFTIVGDAVG…TIVMEVMEEL (78 aa)) is the PDZ domain.

Associated component of the mechanistic target of rapamycin complex 1 (mTORC1) which contains MTOR, MLST8 and RPTOR. Associated component of the mechanistic target of rapamycin complex 2 (mTORC2) which contains MTOR, MLST8, PROTOR1, RICTOR, MAPKAP1 and DEPTOR. Interacts (via PDZ domain) with MTOR; interacts with MTOR within both mTORC1 and mTORC2. Interacts (via PDZ domain) with MINAR1 (via N-terminus). Interacts with SIK3. Post-translationally, phosphorylation weakens interaction with MTOR within mTORC1 and mTORC2. Phosphorylated at Ser-286, Ser-287 and Ser-291 in response to mitogenic stimulation by MTOR: DEPTOR is either directly phosphorylated by MTOR or indirectly via proteins kinases that are activated by MTOR, such as CK1/CSNK1A1. Phosphorylation at Ser-286, Ser-287 and Ser-291 promotes ubiquitination by the SCF(BTRC) complex, followed by degradation. Phosphorylation at Ser-235 by MAPK3/ERK1 promotes deubiquitination by USP7, enhancing its stability. Phosphorylation at Tyr-291 by SYK impairs its interaction with MTOR, promoting mTORC1 and mTORC2 signaling. In terms of processing, ubiquitinated; leading to proteasomal degradation. Ubiquitination by the SCF(BTRC) and SCF(FBXW11) complexes following phosphorylation at Ser-286, Ser-287 and Ser-291 by MTOR, leads to its degradation by the proteasome. Deubiquitinated by OTUB1 in response to amino acid via a non-canonical mechanism, leading to DEPTOR stability. Deubiquitinated by USP7 following phosphorylation at Ser-235, promoting its stability.

It is found in the lysosome membrane. With respect to regulation, inhibited upon phosphatidic acid-binding: phosphatidic acid produced upon mitogenic stimulation promotes DEPTOR dissociatiom from the mTORC1 and mTORC2 complexes, leading to their activation. Specifically binds unsaturated phosphatidic acid, such as 16:0-18:1, 18:0-18:1 and di-18:1. Inhibited when nutrients are present via a feedback loop: phosphorylation by MTOR promotes DEPTOR ubiquitination and degradation. In terms of biological role, negative regulator of the mTORC1 and mTORC2 complexes: inhibits the protein kinase activity of MTOR, thereby inactivating both complexes. DEPTOR inhibits mTORC1 and mTORC2 to induce autophagy. In contrast to AKT1S1/PRAS40, only partially inhibits mTORC1 activity. In Mus musculus (Mouse), this protein is DEP domain-containing mTOR-interacting protein.